The chain runs to 90 residues: MKTAIFTVVLALAVFAVLSFGWEANEKALSEEFTELIHEKEAASETEARECRYFWGECHDHMPCCDWLVCRYKWPIAYNICVWNRTFPEK.

Residues 1–19 form the signal peptide; it reads MKTAIFTVVLALAVFAVLS. Residues 20 to 50 constitute a propeptide that is removed on maturation; that stretch reads FGWEANEKALSEEFTELIHEKEAASETEARE. Disulfide bonds link cysteine 51/cysteine 65, cysteine 58/cysteine 70, and cysteine 64/cysteine 81.

It belongs to the neurotoxin 10 (Hwtx-1) family. 13 (Hntx-13) subfamily. As to expression, expressed by the venom gland.

It localises to the secreted. Its function is as follows. Ion channel inhibitor. This chain is U7-theraphotoxin-Hhn1g, found in Cyriopagopus hainanus (Chinese bird spider).